The sequence spans 161 residues: Large ribosomal subunit protein uL15 (161 aa).

The tract at residues 1–57 is disordered; the sequence is MRLKDAIPKKGSQQRGRRVGRGISAGQGASCGKGMRGQKSRSGGSTRPGFEGGQNPL. Positions 23 to 35 are enriched in gly residues; sequence ISAGQGASCGKGM.

Belongs to the universal ribosomal protein uL15 family. As to quaternary structure, part of the 50S ribosomal subunit.

Its function is as follows. Binds to the 23S rRNA. This Trichodesmium erythraeum (strain IMS101) protein is Large ribosomal subunit protein uL15.